The following is a 236-amino-acid chain: Kinetochore protein Spc25 (236 aa).

Residues 44 to 106 (KNIISAKEAI…DMEAQLLRHT (63 aa)) adopt a coiled-coil conformation. The segment at 194–217 (EVAGASPVTPSGSERPKATSKHSN) is disordered.

Belongs to the SPC25 family. As to quaternary structure, component of the Ndc80 complex, which is composed of Ndc80, Nuf2 and Spc25.

Its subcellular location is the nucleus. It localises to the chromosome. The protein resides in the centromere. The protein localises to the kinetochore. Functionally, acts as a component of the essential kinetochore-associated Ndc80 complex, which is required for chromosome segregation and spindle checkpoint activity during meiosis and mitosis. Required for kinetochore integrity and the organization of stable microtubule binding sites in the outer plate of the kinetochore. Participates in SAC signaling that responds specifically to disruptions in spindle microtubule dynamics. The NDC80 complex synergistically enhances the affinity of the SKA1 complex for microtubules and may allow the NDC80 complex to track depolymerizing microtubules. The sequence is that of Kinetochore protein Spc25 from Drosophila persimilis (Fruit fly).